The sequence spans 254 residues: E3 ubiquitin-protein ligase NEURL3 (254 aa).

The NHR domain maps to Ala-17–Pro-174. The RING-type zinc finger occupies Cys-197–Arg-236.

The protein localises to the cytoplasm. It carries out the reaction S-ubiquitinyl-[E2 ubiquitin-conjugating enzyme]-L-cysteine + [acceptor protein]-L-lysine = [E2 ubiquitin-conjugating enzyme]-L-cysteine + N(6)-ubiquitinyl-[acceptor protein]-L-lysine.. It participates in protein modification; protein ubiquitination. Its function is as follows. E3 ubiquitin-protein ligase that plays a role in various biological processes such as lung development or innate immunity. Seems to utilize UBE2E1. Promotes innate antiviral response by catalyzing 'Lys-63'-linked ubiquitination of IRF7. Also inhibits hepatitis C virus assembly by directly binding to viral E1 envelope glycoprotein to disrupt its interaction with E2. Plays an essential role in TLR4-mediated activation of MAPK pathways by promoting 'Lys-48'-linked polyubiquitination of the phosphatase DUSP1/MKP1. The polypeptide is E3 ubiquitin-protein ligase NEURL3 (Neurl3) (Rattus norvegicus (Rat)).